Here is a 254-residue protein sequence, read N- to C-terminus: Pimeloyl-[acyl-carrier protein] methyl ester esterase (254 aa).

Substrate is bound by residues Trp20, Ser80–Leu81, and Phe141–Gln145. The active-site Nucleophile is Ser80. Catalysis depends on residues Asp205 and His233. His233 contacts substrate.

This sequence belongs to the AB hydrolase superfamily. Carboxylesterase BioH family. Monomer.

The protein localises to the cytoplasm. It carries out the reaction 6-carboxyhexanoyl-[ACP] methyl ester + H2O = 6-carboxyhexanoyl-[ACP] + methanol + H(+). It functions in the pathway cofactor biosynthesis; biotin biosynthesis. Functionally, the physiological role of BioH is to remove the methyl group introduced by BioC when the pimeloyl moiety is complete. It allows to synthesize pimeloyl-ACP via the fatty acid synthetic pathway through the hydrolysis of the ester bonds of pimeloyl-ACP esters. The protein is Pimeloyl-[acyl-carrier protein] methyl ester esterase of Methylococcus capsulatus (strain ATCC 33009 / NCIMB 11132 / Bath).